The chain runs to 122 residues: Sterile alpha motif domain-containing protein 13 (122 aa).

An SAM domain is found at 51–119 (WAVMDVVNYF…KPLQTKHLKN (69 aa)).

The sequence is that of Sterile alpha motif domain-containing protein 13 (SAMD13) from Homo sapiens (Human).